Here is a 355-residue protein sequence, read N- to C-terminus: Heterogeneous nuclear ribonucleoprotein D0 (355 aa).

Residues 1-92 (MSEEQFGGDG…SPRHSEAATA (92 aa)) form a disordered region. S2 carries the N-acetylserine modification. Composition is skewed to low complexity over residues 11–20 (AAAAATAAVG) and 27–42 (EGAM…AAAG). Residues 43–58 (SGAGTGGGTASGGTEG) show a composition bias toward gly residues. The span at 64–73 (EGAKIDASKN) shows a compositional bias: basic and acidic residues. S71 is subject to Phosphoserine. K72 is covalently cross-linked (Glycyl lysine isopeptide (Lys-Gly) (interchain with G-Cter in SUMO2)). Residues S80, S82, and S83 each carry the phosphoserine modification. The residue at position 91 (T91) is a Phosphothreonine. RRM domains lie at 97–179 (WKMF…KTKE) and 182–261 (KKIF…MSKE). Residue K119 is modified to N6-methyllysine. At T127 the chain carries Phosphothreonine. K129 is covalently cross-linked (Glycyl lysine isopeptide (Lys-Gly) (interchain with G-Cter in SUMO2)). K165 is subject to N6-acetyllysine. A Phosphoserine modification is found at S190. T193 carries the post-translational modification Phosphothreonine. K197 is covalently cross-linked (Glycyl lysine isopeptide (Lys-Gly) (interchain with G-Cter in SUMO2)). N6-acetyllysine is present on residues K243 and K251. Y263 is subject to Omega-N-methylarginine. Position 271 is a phosphoserine (S271). The residue at position 272 (R272) is an Omega-N-methylarginine. G273 is subject to N6-acetyllysine. R278, R280, and R282 each carry omega-N-methylarginine. The residue at position 292 (Q292) is an N6-acetyllysine. The residue at position 345 (R345) is an Asymmetric dimethylarginine; alternate. At R345 the chain carries Dimethylated arginine; alternate. An Omega-N-methylarginine; alternate modification is found at R345.

Identified in a IGF2BP1-dependent mRNP granule complex containing untranslated mRNAs. Part of a complex associated with the FOS mCRD domain and consisting of PABPC1, PAIP1, CSDE1/UNR and SYNCRIP. Interacts with IGF2BP2. Interacts with GTPBP1. Interacts with EIF4G1; the interaction requires RNA. Interacts with EIF3B and RPS3. Arg-345 is dimethylated, probably to asymmetric dimethylarginine. Post-translationally, methylated by PRMT1, in an insulin-dependent manner. The PRMT1-mediated methylation regulates tyrosine phosphorylation.

Its subcellular location is the nucleus. It localises to the cytoplasm. Functionally, binds with high affinity to RNA molecules that contain AU-rich elements (AREs) found within the 3'-UTR of many proto-oncogenes and cytokine mRNAs. Also binds to double- and single-stranded DNA sequences in a specific manner and functions a transcription factor. Each of the RNA-binding domains specifically can bind solely to a single-stranded non-monotonous 5'-UUAG-3' sequence and also weaker to the single-stranded 5'-TTAGGG-3' telomeric DNA repeat. Binds RNA oligonucleotides with 5'-UUAGGG-3' repeats more tightly than the telomeric single-stranded DNA 5'-TTAGGG-3' repeats. Binding of RRM1 to DNA inhibits the formation of DNA quadruplex structure which may play a role in telomere elongation. May be involved in translationally coupled mRNA turnover. Implicated with other RNA-binding proteins in the cytoplasmic deadenylation/translational and decay interplay of the FOS mRNA mediated by the major coding-region determinant of instability (mCRD) domain. May play a role in the regulation of the rhythmic expression of circadian clock core genes. Directly binds to the 3'UTR of CRY1 mRNA and induces CRY1 rhythmic translation. May also be involved in the regulation of PER2 translation. This Homo sapiens (Human) protein is Heterogeneous nuclear ribonucleoprotein D0 (HNRNPD).